An 87-amino-acid chain; its full sequence is Large ribosomal subunit protein bL31B (87 aa).

It belongs to the bacterial ribosomal protein bL31 family. Type B subfamily. In terms of assembly, part of the 50S ribosomal subunit.

The polypeptide is Large ribosomal subunit protein bL31B (Paraburkholderia phymatum (strain DSM 17167 / CIP 108236 / LMG 21445 / STM815) (Burkholderia phymatum)).